A 447-amino-acid chain; its full sequence is Na(+)-translocating NADH-quinone reductase subunit A (447 aa).

This sequence belongs to the NqrA family. Composed of six subunits; NqrA, NqrB, NqrC, NqrD, NqrE and NqrF.

It carries out the reaction a ubiquinone + n Na(+)(in) + NADH + H(+) = a ubiquinol + n Na(+)(out) + NAD(+). Functionally, NQR complex catalyzes the reduction of ubiquinone-1 to ubiquinol by two successive reactions, coupled with the transport of Na(+) ions from the cytoplasm to the periplasm. NqrA to NqrE are probably involved in the second step, the conversion of ubisemiquinone to ubiquinol. The polypeptide is Na(+)-translocating NADH-quinone reductase subunit A (Hahella chejuensis (strain KCTC 2396)).